The following is a 488-amino-acid chain: MTDRKNLTTNQGVPVGDNQNSMTAGRKGPTLIEDYVLIEKLAHFDRERVPERVVHARGAGAHGKFVTKKSMKKYTMAKFLQEEGTETEVFARFSTVIHGQHSPETLRDPRGFSVKFYTEEGNYDFVGNNLPVFFIRDAIKFPDVIHSLKPDPRTNIQDGNRYWDFFSLTPEATTMIMYLFSDEGTPASYREVRGSSVHAFKWINEEGKTVYVKLRWVPKAGIVNLSTEQASQIQAKEFNHASRDLYEAIENGDYPEWDLYVQVLDPKDLDSFDFNPLDATKDWFEDVFPYEHVGTMTLDRNPDNIFAETESVGFNPGVLVRGMLPSEDRLLQGRLFSYSDTQRHRVGPNYLQLPINSPKAPVANNQRDGHMPFKQQTSSINYEPNSYDTEPKENPAFIEPEQEIRGDISGRLIAEKPNNFGHAKEVWDRYSNAERAALVKNIVDDWSQVREDIKIRNLRNFYQVDPEFASRVAAGTGINLEEHVTDLK.

Residues 1 to 26 (MTDRKNLTTNQGVPVGDNQNSMTAGR) form a disordered region. The segment covering 7–23 (LTTNQGVPVGDNQNSMT) has biased composition (polar residues). Residues histidine 55 and asparagine 128 contribute to the active site. Residue tyrosine 338 participates in heme binding.

The protein belongs to the catalase family. Heme is required as a cofactor.

Its subcellular location is the cytoplasm. The enzyme catalyses 2 H2O2 = O2 + 2 H2O. Its function is as follows. Decomposes hydrogen peroxide into water and oxygen; serves to protect cells from the toxic effects of hydrogen peroxide. This is Catalase (kat) from Listeria monocytogenes serovar 1/2a (strain ATCC BAA-679 / EGD-e).